Reading from the N-terminus, the 101-residue chain is Small ribosomal subunit protein uS14 (101 aa).

Over residues 1-10 (MAKKSSIEKN) the composition is skewed to basic and acidic residues. Positions 1–23 (MAKKSSIEKNNRRRRMNRNAAAK) are disordered. Basic residues predominate over residues 11–23 (NRRRRMNRNAAAK).

Belongs to the universal ribosomal protein uS14 family. In terms of assembly, part of the 30S ribosomal subunit. Contacts proteins S3 and S10.

In terms of biological role, binds 16S rRNA, required for the assembly of 30S particles and may also be responsible for determining the conformation of the 16S rRNA at the A site. In Nitrobacter winogradskyi (strain ATCC 25391 / DSM 10237 / CIP 104748 / NCIMB 11846 / Nb-255), this protein is Small ribosomal subunit protein uS14.